Reading from the N-terminus, the 125-residue chain is Cu-Zn superoxide dismutase-like protein OPG175 (125 aa).

Cysteine 52 and cysteine 102 are oxidised to a cystine.

This sequence belongs to the Cu-Zn superoxide dismutase family.

It is found in the virion. It localises to the host cytoplasm. In terms of biological role, superoxide dismutase-like protein with no enzymatic activity. In Vaccinia virus (strain Western Reserve) (VACV), this protein is Cu-Zn superoxide dismutase-like protein OPG175 (OPG175).